We begin with the raw amino-acid sequence, 184 residues long: GTP-dependent dephospho-CoA kinase (184 aa).

GTP is bound by residues aspartate 33, valine 34, aspartate 52, lysine 54, and glutamate 103.

This sequence belongs to the GTP-dependent DPCK family.

The enzyme catalyses 3'-dephospho-CoA + GTP = GDP + CoA + H(+). It functions in the pathway cofactor biosynthesis; coenzyme A biosynthesis. Functionally, catalyzes the GTP-dependent phosphorylation of the 3'-hydroxyl group of dephosphocoenzyme A to form coenzyme A (CoA). This chain is GTP-dependent dephospho-CoA kinase, found in Ignicoccus hospitalis (strain KIN4/I / DSM 18386 / JCM 14125).